We begin with the raw amino-acid sequence, 409 residues long: BRCA1-A complex subunit Abraxas 1 (409 aa).

The 154-residue stretch at 7–160 folds into the MPN domain; sequence SAVLSGFVLG…HSLYKPQKGL (154 aa). At Ser-48 the chain carries Phosphoserine. Positions 206-260 form a coiled coil; sequence DGSLKEVHKINEMYASLQEELKSICKKVEDSEQAVDKLVKDVNRLKREIEKRRGA. The segment covering 362-372 has biased composition (basic and acidic residues); the sequence is LLDTQDKRSKA. A disordered region spans residues 362–409; the sequence is LLDTQDKRSKADTGSSNQDKASKMSSPETDEEIEKMKGFGEYSRSPTF. Residues 373–388 are compositionally biased toward polar residues; that stretch reads DTGSSNQDKASKMSSP. Phosphoserine is present on residues Ser-386 and Ser-387. The residue at position 390 (Thr-390) is a Phosphothreonine. Phosphoserine occurs at positions 404 and 406. A pSXXF motif motif is present at residues 406-409; sequence SPTF.

This sequence belongs to the FAM175 family. Abraxas subfamily. In terms of assembly, component of the ARISC complex, at least composed of UIMC1/RAP80, ABRAXAS1, BRCC3/BRCC36, BABAM2 and BABAM1/NBA1. Component of the BRCA1-A complex, at least composed of BRCA1, BARD1, UIMC1/RAP80, ABRAXAS1, BRCC3/BRCC36, BABAM2 and BABAM1/NBA1. In the complex, interacts directly with UIMC1/RAP80, BRCC3/BRCC36 and BABAM2. Interacts directly (when phosphorylated at Ser-406) with BRCA1. Homodimer. The homodimer interacts directly (when phosphorylated at Ser-404 and Ser-406) with two BRCA1 chains, giving rise to a heterotetramer. Binds polyubiquitin. Phosphorylation of Ser-406 of the pSXXF motif by ATM or ATR constitutes a specific recognition motif for the BRCT domain of BRCA1. Ionizing radiation promotes rapid phosphorylation at Ser-404 and Ser-406 by ATM; this promotes recruitment of BRCA1 to sites of DNA damage.

The protein resides in the nucleus. Its function is as follows. Involved in DNA damage response and double-strand break (DSB) repair. Component of the BRCA1-A complex, acting as a central scaffold protein that assembles the various components of the complex and mediates the recruitment of BRCA1. The BRCA1-A complex specifically recognizes 'Lys-63'-linked ubiquitinated histones H2A and H2AX at DNA lesion sites, leading to target the BRCA1-BARD1 heterodimer to sites of DNA damage at DSBs. This complex also possesses deubiquitinase activity that specifically removes 'Lys-63'-linked ubiquitin on histones H2A and H2AX. The sequence is that of BRCA1-A complex subunit Abraxas 1 from Homo sapiens (Human).